A 139-amino-acid chain; its full sequence is ATP synthase epsilon chain (139 aa).

This sequence belongs to the ATPase epsilon chain family. F-type ATPases have 2 components, CF(1) - the catalytic core - and CF(0) - the membrane proton channel. CF(1) has five subunits: alpha(3), beta(3), gamma(1), delta(1), epsilon(1). CF(0) has three main subunits: a, b and c.

Its subcellular location is the cell inner membrane. Functionally, produces ATP from ADP in the presence of a proton gradient across the membrane. The polypeptide is ATP synthase epsilon chain (Shigella boydii serotype 18 (strain CDC 3083-94 / BS512)).